A 472-amino-acid polypeptide reads, in one-letter code: MSAVIALVGRPNVGKSTLFNRLTGSRDALVADHPGLTRDRQYGIVRHQGGHAVVVDTGGMGEELEGVGGCMHEQARAAIAGADAVVFLVDGQAGATVGDEEIAAELRRAQVPVFLAVNKTDGLDAGVAAADFHGLGLQPVHAIAATRGRGVGELLDAVFALLPPAEPDAVGSDGPGGIPVAMIGRPNVGKSTLVNRLLGEERVVVYDEPGTTRDSIAVPFERDGQHYTLIDTAGVRRRARVQETVEKFSVVKTLEAIERASVVMLVTDAQEGITEQDAHLAGHVLQAGRALVLVINKWDGLDPDQRRKVRRDLDLRFAFLGFARHHFVSALHGSGVGLLLESVERAHAAAHRDLATPELNDALQEALANHQPPLSRGRRIKLRYAHQGGHNPPVIVIHGNQVQRLPRAYMRYLENFFRDTFDLYGTPVRIECRASDNPFADKPNQLTERQRRRRQRVIHHAKKREKKRKRRR.

2 consecutive EngA-type G domains span residues 3 to 166 (AVIA…PPAE) and 178 to 351 (IPVA…AAAH). Residues 9-16 (GRPNVGKS), 56-60 (DTGGM), 118-121 (NKTD), 184-191 (GRPNVGKS), 231-235 (DTAGV), and 296-299 (NKWD) contribute to the GTP site. The KH-like domain maps to 352-436 (RDLATPELND…PVRIECRASD (85 aa)). The segment at 434–472 (ASDNPFADKPNQLTERQRRRRQRVIHHAKKREKKRKRRR) is disordered. The segment covering 450 to 472 (QRRRRQRVIHHAKKREKKRKRRR) has biased composition (basic residues).

It belongs to the TRAFAC class TrmE-Era-EngA-EngB-Septin-like GTPase superfamily. EngA (Der) GTPase family. As to quaternary structure, associates with the 50S ribosomal subunit.

In terms of biological role, GTPase that plays an essential role in the late steps of ribosome biogenesis. This Halorhodospira halophila (strain DSM 244 / SL1) (Ectothiorhodospira halophila (strain DSM 244 / SL1)) protein is GTPase Der.